Reading from the N-terminus, the 392-residue chain is Integrin-linked kinase-associated serine/threonine phosphatase 2C (392 aa).

Position 1 is an N-acetylmethionine (Met1). Positions 1-91 (MDLFGDLPEP…PEEEKNGGEE (91 aa)) are disordered. Positions 56–70 (SGNSGSLATSGSQVV) are enriched in polar residues. The segment covering 72–91 (TEGKGAKRKAPEEEKNGGEE) has biased composition (basic and acidic residues). The region spanning 108–390 (KGYVAERKGE…DNVTVMVVRI (283 aa)) is the PPM-type phosphatase domain. Mn(2+)-binding residues include Asp152 and Gly153. N6-acetyllysine is present on Lys210. Residues Asp326 and Asp381 each coordinate Mn(2+).

Belongs to the PP2C family. As to quaternary structure, interacts with ILK. Mg(2+) serves as cofactor. Mn(2+) is required as a cofactor.

The protein localises to the cytoplasm. The enzyme catalyses O-phospho-L-seryl-[protein] + H2O = L-seryl-[protein] + phosphate. It catalyses the reaction O-phospho-L-threonyl-[protein] + H2O = L-threonyl-[protein] + phosphate. In terms of biological role, protein phosphatase that may play a role in regulation of cell cycle progression via dephosphorylation of its substrates whose appropriate phosphorylation states might be crucial for cell proliferation. Selectively associates with integrin linked kinase (ILK), to modulate cell adhesion and growth factor signaling. Inhibits the ILK-GSK3B signaling axis and may play an important role in inhibiting oncogenic transformation. The chain is Integrin-linked kinase-associated serine/threonine phosphatase 2C (Ilkap) from Mus musculus (Mouse).